The following is a 58-amino-acid chain: Sodium/potassium-transporting ATPase subunit gamma (58 aa).

Residues 20-39 form a helical membrane-spanning segment; that stretch reads NGGLIFAALAFIVGLVIILS.

It belongs to the FXYD family. Regulatory subunit of the sodium/potassium-transporting ATPase which is composed of a catalytic alpha subunit, an auxiliary non-catalytic beta subunit and an additional regulatory subunit. Highest levels expressed in the kidney and spleen. Restricted to the basolateral membrane in renal epithelial cells and varies in its level of expression along the nephron.

It is found in the membrane. Functionally, may be involved in forming the receptor site for cardiac glycoside binding or may modulate the transport function of the sodium ATPase. The sequence is that of Sodium/potassium-transporting ATPase subunit gamma (FXYD2) from Bos taurus (Bovine).